We begin with the raw amino-acid sequence, 120 residues long: NAD(P)H-quinone oxidoreductase subunit 3 (120 aa).

Helical transmembrane passes span 6–26, 64–84, and 89–109; these read GYDAFLGFLLISAAVPALALV, MFALVFVIFDVETVFLYPWAV, and LGLLAFIEALIFISILIVALA.

This sequence belongs to the complex I subunit 3 family. In terms of assembly, NDH-1 can be composed of about 15 different subunits; different subcomplexes with different compositions have been identified which probably have different functions.

The protein resides in the cellular thylakoid membrane. It catalyses the reaction a plastoquinone + NADH + (n+1) H(+)(in) = a plastoquinol + NAD(+) + n H(+)(out). The enzyme catalyses a plastoquinone + NADPH + (n+1) H(+)(in) = a plastoquinol + NADP(+) + n H(+)(out). NDH-1 shuttles electrons from an unknown electron donor, via FMN and iron-sulfur (Fe-S) centers, to quinones in the respiratory and/or the photosynthetic chain. The immediate electron acceptor for the enzyme in this species is believed to be plastoquinone. Couples the redox reaction to proton translocation, and thus conserves the redox energy in a proton gradient. Cyanobacterial NDH-1 also plays a role in inorganic carbon-concentration. This chain is NAD(P)H-quinone oxidoreductase subunit 3, found in Prochlorococcus marinus (strain SARG / CCMP1375 / SS120).